A 752-amino-acid chain; its full sequence is Phosphoribosylformylglycinamidine synthase subunit PurL (752 aa).

Residue histidine 58 is part of the active site. 2 residues coordinate ATP: tyrosine 61 and lysine 103. Glutamate 105 is a binding site for Mg(2+). Substrate is bound by residues 106–109 (SHNH) and arginine 128. The Proton acceptor role is filled by histidine 107. Aspartate 129 contributes to the Mg(2+) binding site. Substrate is bound at residue glutamine 253. Residue aspartate 281 participates in Mg(2+) binding. 325–327 (ESQ) is a substrate binding site. 2 residues coordinate ATP: aspartate 513 and glycine 550. Position 551 (asparagine 551) interacts with Mg(2+). Residue serine 553 coordinates substrate.

It belongs to the FGAMS family. In terms of assembly, monomer. Part of the FGAM synthase complex composed of 1 PurL, 1 PurQ and 2 PurS subunits.

The protein localises to the cytoplasm. The catalysed reaction is N(2)-formyl-N(1)-(5-phospho-beta-D-ribosyl)glycinamide + L-glutamine + ATP + H2O = 2-formamido-N(1)-(5-O-phospho-beta-D-ribosyl)acetamidine + L-glutamate + ADP + phosphate + H(+). Its pathway is purine metabolism; IMP biosynthesis via de novo pathway; 5-amino-1-(5-phospho-D-ribosyl)imidazole from N(2)-formyl-N(1)-(5-phospho-D-ribosyl)glycinamide: step 1/2. Functionally, part of the phosphoribosylformylglycinamidine synthase complex involved in the purines biosynthetic pathway. Catalyzes the ATP-dependent conversion of formylglycinamide ribonucleotide (FGAR) and glutamine to yield formylglycinamidine ribonucleotide (FGAM) and glutamate. The FGAM synthase complex is composed of three subunits. PurQ produces an ammonia molecule by converting glutamine to glutamate. PurL transfers the ammonia molecule to FGAR to form FGAM in an ATP-dependent manner. PurS interacts with PurQ and PurL and is thought to assist in the transfer of the ammonia molecule from PurQ to PurL. The chain is Phosphoribosylformylglycinamidine synthase subunit PurL from Streptomyces avermitilis (strain ATCC 31267 / DSM 46492 / JCM 5070 / NBRC 14893 / NCIMB 12804 / NRRL 8165 / MA-4680).